A 3961-amino-acid polypeptide reads, in one-letter code: Replicase polyprotein 1ab (3961 aa).

The C4-type; atypical zinc-finger motif lies at 8–28 (CTCTPNARVFVAEGQVYCTRC). Residues 69 to 180 (ECSPTGACWL…EDFCPFECAM (112 aa)) enclose the Peptidase C31 domain. The interval 69–182 (ECSPTGACWL…FCPFECAMAD (114 aa)) is PCP1-alpha. Active-site for Nsp1-alpha papain-like cysteine proteinase activity residues include Cys76 and His146. The tract at residues 199-200 (VS) is important for host EIF2AK2 inhibition. The tract at residues 263–382 (DTVPEGNCWW…IFRFGSHKWY (120 aa)) is PCP1-beta. The 121-residue stretch at 263 to 383 (DTVPEGNCWW…FRFGSHKWYG (121 aa)) folds into the Peptidase C32 domain. Catalysis depends on for Nsp1-beta papain-like cysteine proteinase activity residues Cys270 and His339. Positions 426–513 (LKLYSPPAEG…GEHWTVSVNP (88 aa)) are OTU-like. The region spanning 428–535 (LYSPPAEGNC…QGCCEHKGGL (108 aa)) is the Peptidase C33 domain. Catalysis depends on for Nsp2 cysteine proteinase activity residues Cys437 and His506. The span at 810-819 (WTPPPPPPRV) shows a compositional bias: pro residues. Disordered stretches follow at residues 810 to 875 (WTPP…FPTP), 899 to 918 (TPLD…SRPM), and 1148 to 1191 (TGEL…PADT). Helical transmembrane passes span 1266-1286 (FCLF…LGVF), 1296-1316 (GVFG…SDPV), 1368-1388 (VWHF…GAYV), 1583-1603 (LVAA…GVYV), 1648-1668 (LTAL…LIFV), 1685-1705 (CILL…LCVF), and 1719-1739 (ILWL…LAVV). The HD1 stretch occupies residues 1266–1388 (FCLFLCYSYP…ADCILAGAYV (123 aa)). The tract at residues 1583-1745 (LVAALHVACS…LAVVLLVSLW (163 aa)) is HD2. One can recognise a Peptidase S32 domain in the interval 1810–2013 (GAFRTQKPSL…ALLAAKPELE (204 aa)). Active-site charge relay system; for 3C-like serine proteinase activity residues include His1848, Asp1873, and Ser1927. 5 helical membrane passes run 2036 to 2056 (WTPL…AVLV), 2060 to 2080 (FSFG…VLMI), 2092 to 2112 (LSLG…LAVT), 2137 to 2157 (SPVP…LYLF), and 2162 to 2182 (LHYV…RYFA). The HD3 stretch occupies residues 2036-2157 (WTPLVAVGFF…HLLAIILYLF (122 aa)). Residues 2488–2651 (IIDKLQGLTK…LPYKLYPVRG (164 aa)) form the NiRAN domain. In terms of domain architecture, RdRp catalytic spans 2890–3024 (GRCLEADLAS…YAESPSMPNY (135 aa)). The 64-residue stretch at 3145-3208 (GKKSRMCGYC…PPLGKGTSPL (64 aa)) folds into the AV ZBD domain. Positions 3151, 3154, 3164, 3169, 3172, 3174, 3176, 3178, 3185, 3187, 3194, and 3197 each coordinate Zn(2+). In terms of domain architecture, (+)RNA virus helicase ATP-binding spans 3265 to 3417 (ASTALLPTCK…VFDIMPQTQL (153 aa)). Residue 3293–3300 (GPPGAGKT) coordinates ATP. One can recognise a (+)RNA virus helicase C-terminal domain in the interval 3418–3546 (KTIWRFGQNI…AVHRDEQLIV (129 aa)). The 97-residue stretch at 3585-3681 (EGSSSPLPKV…LTKFVRGEAQ (97 aa)) folds into the AV-Nsp11N/CoV-Nsp15M domain. One can recognise a NendoU domain in the interval 3683–3805 (LPETVFSTGR…MVWKGKTAYF (123 aa)). Residues His3714, His3729, and Lys3758 contribute to the active site.

It belongs to the arteriviridae polyprotein family. In terms of assembly, nsp1-alpha papain-like: Interacts with host RNF31. Interacts with host EIF2AK2; this interaction occurs in host stress granules and leads to EIF2AK2 inhibition. Interacts with host G3BP1; this interaction probably plays a role in Nsp1-beta-mediated inhibition of host EIF2AK2. As to quaternary structure, interacts with host DDX18; this interaction redistributes host DDX18 to the cytoplasm. In terms of assembly, interacts with host IFITM1. Interacts with host DDX5. As to quaternary structure, interacts with host OTULIN. In terms of assembly, interacts with host LGALS3. Specific enzymatic cleavages in vivo by its own proteases yield mature proteins. Nsp1 is autocleaved into two subunits, Nsp1-alpha and Nsp1-beta. There are two alternative pathways for processing. Either nsp4-5 is cleaved, which represents the major pathway or the nsp5-6 and nsp6-7 are processed, which represents the minor pathway. The major pathway occurs when nsp2 acts as a cofactor for nsp4.

Its subcellular location is the host nucleus. It localises to the host cytoplasm. The protein localises to the host membrane. It is found in the host endoplasmic reticulum. The protein resides in the host perinuclear region. It carries out the reaction RNA(n) + a ribonucleoside 5'-triphosphate = RNA(n+1) + diphosphate. The catalysed reaction is ATP + H2O = ADP + phosphate + H(+). It catalyses the reaction Thiol-dependent hydrolysis of ester, thioester, amide, peptide and isopeptide bonds formed by the C-terminal Gly of ubiquitin (a 76-residue protein attached to proteins as an intracellular targeting signal).. The enzyme catalyses uridylyl-uridylyl-ribonucleotide-RNA = a 3'-end uridylyl-2',3'-cyclophospho-uridine-RNA + a 5'-end dephospho-ribonucleoside-RNA. In terms of biological role, contains the activities necessary for the transcription of negative stranded RNA, leader RNA, subgenomic mRNAs and progeny virion RNA as well as proteinases responsible for the cleavage of the polyprotein into functional products. Functionally, inhibits host IFN-beta production. Plays a role in the degradation of the host transcriptional activator CREBBP protein. The degradation of host CREBBP which is a key component of the IFN enhanceosome is likely responsible for the inhibition of interferon mediated by Nsp1-alpha. Also participates in the inhibition of host NF-kappa-B activation by counteracting LUBAC-dependent induction of NF-kappa-B. Reduces host NEMO ubiquitination by blocking the interaction between the two LUBAC complex components RNF31 and SHARPIN. Its function is as follows. Plays a role in blocking host mRNA nuclear export to the cytoplasm and subversion of host protein synthesis. Additionally, inhibits the interferon-activated JAK/STAT signal transduction by mediating the ubiquitination and subsequent proteasomal degradation of host KPNA1. Repurposes the host antiviral stress granules into a proviral platform to counteract the EIF2AK2/PKR restriction, thereby regulating the host inflammatory response. Multifunctional protein that acts as a viral protease and as a viral antagonist of host immune response. Cleaves the nsp2/nsp3 site in the viral polyprotein. Displays deubiquitinating activity that cleaves both ubiquitinated and ISGylated products and therefore inhibits ubiquitin and ISG15-dependent host innate immunity. Also deubiquinates host NFKBIA, thereby interfering with NFKBIA degradation and impairing subsequent NF-kappa-B activation. In terms of biological role, plays a role in the inhibition of the immune response by interacting with host IFITM1. This interaction leads to the proteasomal degradation of the IFN-induced antiviral protein IFITM1. Functionally, cleaves the majority of cleavage sites present in the C-terminus of the polyprotein. Triggers host apoptosis through caspase-3, -8, and -9 activations. Subverts host innate immune responses through its protease activity. Targets the NF-kappa-B essential modulator NEMO and mediates its cleavage. Blocks host interferon beta induction and downstream signaling by cleaving mitochondrial MAVS, dislodging it from the mitochondria. Impairs host defense by cleaving host mRNA-decapping enzyme DCP1A to attenuate its antiviral activity. Its function is as follows. Plays a role in the initial induction of autophagosomes from host endoplasmic reticulum. Plays a role in the inhibition of host STAT3 signaling pathway by inducing the degradation of STAT3. In terms of biological role, responsible for replication and transcription of the viral RNA genome. Functionally, displays RNA and DNA duplex-unwinding activities with 5' to 3' polarity. Its function is as follows. Plays a role in viral transcription/replication and prevents the simultaneous activation of host cell dsRNA sensors, such as MDA5/IFIH1, OAS, PKR and NLRP3 inflammasome. Acts by degrading the 5'-polyuridines generated during replication of the poly(A) region of viral genomic and subgenomic RNAs. Catalyzes a two-step reaction in which a 2'3'-cyclic phosphate (2'3'-cP) is first generated by 2'-O transesterification, which is then hydrolyzed to a 3'-phosphate (3'-P). If not degraded, poly(U) RNA would hybridize with poly(A) RNA tails and activate host dsRNA sensors. Also plays a role in the inhibition of host type I interferon production by recruiting host OTULIN to promote removal of linear ubiquitination targeting host NEMO. The protein is Replicase polyprotein 1ab (rep) of Porcine reproductive and respiratory syndrome virus (strain HB-1) (PRRSV).